We begin with the raw amino-acid sequence, 223 residues long: Protein Wnt-1 (223 aa).

3 disulfides stabilise this stretch: cysteine 7/cysteine 24, cysteine 72/cysteine 86, and cysteine 74/cysteine 81. The O-palmitoleoyl serine; by PORCN moiety is linked to residue serine 78. The tract at residues 110–135 (VTMRNDGSPSDRETESSFVPYNPSHK) is disordered. Positions 125–135 (SSFVPYNPSHK) are enriched in polar residues. Cystine bridges form between cysteine 152/cysteine 183, cysteine 168/cysteine 178, cysteine 182/cysteine 222, cysteine 198/cysteine 213, cysteine 200/cysteine 210, and cysteine 205/cysteine 206. Asparagine 169 carries an N-linked (GlcNAc...) asparagine glycan.

This sequence belongs to the Wnt family. Post-translationally, palmitoleoylation is required for efficient binding to frizzled receptors. Palmitoleoylation is necessary for proper trafficking to cell surface. Depalmitoleoylated by NOTUM, leading to inhibit Wnt signaling pathway.

Its subcellular location is the secreted. It localises to the extracellular space. The protein resides in the extracellular matrix. Ligand for members of the frizzled family of seven transmembrane receptors. Probable developmental protein. In Strongylocentrotus purpuratus (Purple sea urchin), this protein is Protein Wnt-1 (WNT-1).